Consider the following 855-residue polypeptide: Suppressor of tumorigenicity 14 protein homolog (855 aa).

The Cytoplasmic segment spans residues 1-55; sequence MGSNRGRKAGGGSQDFGAGLKYNSRLENMNGFEEGVEFLPANNAKKVEKRGPRRW. Residue Ser-13 is modified to Phosphoserine. Residues 56–76 traverse the membrane as a helical; Signal-anchor for type II membrane protein segment; that stretch reads VVLVAVLFSFLLLSLMAGLLV. Residues 77-855 lie on the Extracellular side of the membrane; it reads WHFHYRNVRV…RDWIKEHTGV (779 aa). The region spanning 86–203 is the SEA domain; sequence VQKVFNGHLR…TSVVAFPIDP (118 aa). N-linked (GlcNAc...) asparagine glycosylation is present at Asn-107. Cys-214 and Cys-244 are joined by a disulfide. 2 CUB domains span residues 214-331 and 340-444; these read CSFA…EATF and CGGF…LAEY. Residues Asn-302 and Asn-365 are each glycosylated (N-linked (GlcNAc...) asparagine). 2 disulfide bridges follow: Cys-340/Cys-366 and Cys-397/Cys-410. N-linked (GlcNAc...) asparagine glycosylation occurs at Asn-421. 4 consecutive LDL-receptor class A domains span residues 451 to 488, 489 to 522, 523 to 561, and 565 to 604; these read DPCP…YCRC, NATH…DEEG, CSCP…SCDS, and VSCT…NCDC. 13 disulfide bridges follow: Cys-453–Cys-464, Cys-459–Cys-477, Cys-471–Cys-486, Cys-488–Cys-501, Cys-496–Cys-514, Cys-508–Cys-523, Cys-525–Cys-537, Cys-532–Cys-550, Cys-544–Cys-559, Cys-567–Cys-579, Cys-574–Cys-593, Cys-587–Cys-602, and Cys-641–Cys-657. Residue Asn-489 is glycosylated (N-linked (GlcNAc...) asparagine). One can recognise a Peptidase S1 domain in the interval 615–854; sequence VVGGTNADEG…VRDWIKEHTG (240 aa). Catalysis depends on charge relay system residues His-656 and Asp-711. N-linked (GlcNAc...) asparagine glycosylation occurs at Asn-772. Disulfide bonds link Cys-776–Cys-790 and Cys-801–Cys-830. Ser-805 serves as the catalytic Charge relay system.

This sequence belongs to the peptidase S1 family. As to quaternary structure, interacts with CDCP1. May interact with TMEFF1. In terms of tissue distribution, highly expressed in intestine, kidney, lung, and thymus. Not expressed in skeletal muscle, liver, heart, testis and brain.

Its subcellular location is the membrane. The enzyme catalyses Cleaves various synthetic substrates with Arg or Lys at the P1 position and prefers small side-chain amino acids, such as Ala and Gly, at the P2 position.. Functionally, exhibits trypsin-like activity as defined by cleavage of synthetic substrates with Arg or Lys as the P1 site. Involved in the terminal differentiation of keratinocytes through prostasin (PRSS8) activation and filaggrin (FLG) processing. Proteolytically cleaves and therefore activates TMPRSS13. The chain is Suppressor of tumorigenicity 14 protein homolog (St14) from Mus musculus (Mouse).